Here is a 130-residue protein sequence, read N- to C-terminus: Ribosome-binding factor A (130 aa).

Belongs to the RbfA family. As to quaternary structure, monomer. Binds 30S ribosomal subunits, but not 50S ribosomal subunits or 70S ribosomes.

Its subcellular location is the cytoplasm. One of several proteins that assist in the late maturation steps of the functional core of the 30S ribosomal subunit. Associates with free 30S ribosomal subunits (but not with 30S subunits that are part of 70S ribosomes or polysomes). Required for efficient processing of 16S rRNA. May interact with the 5'-terminal helix region of 16S rRNA. The chain is Ribosome-binding factor A from Alkalilimnicola ehrlichii (strain ATCC BAA-1101 / DSM 17681 / MLHE-1).